The primary structure comprises 107 residues: Protein p13 MTCP-1 (107 aa).

This sequence belongs to the TCL1 family. As to quaternary structure, interacts with AKT1 and AKT2 (via PH domain). Does not interact with AKT3. As to expression, not found at a significant level in any tissue.

In terms of biological role, enhances the phosphorylation and activation of AKT1 and AKT2. The chain is Protein p13 MTCP-1 (Mtcp1) from Mus musculus (Mouse).